Consider the following 475-residue polypeptide: Tesmin (475 aa).

Phosphoserine occurs at positions 34 and 67. The 110-residue stretch at 263 to 372 (SGPALQGPPK…KCIACKNYEE (110 aa)) folds into the CRC domain.

Belongs to the lin-54 family.

The protein resides in the cytoplasm. The protein localises to the nucleus. May have a role in spermatogenesis. In Rattus norvegicus (Rat), this protein is Tesmin.